A 332-amino-acid chain; its full sequence is Lipoyl synthase (332 aa).

7 residues coordinate [4Fe-4S] cluster: Cys74, Cys79, Cys85, Cys100, Cys104, Cys107, and Ser314. One can recognise a Radical SAM core domain in the interval 85–303; sequence CFGKGTATFM…EQEAYRMGFS (219 aa).

Belongs to the radical SAM superfamily. Lipoyl synthase family. [4Fe-4S] cluster is required as a cofactor.

It is found in the cytoplasm. It carries out the reaction [[Fe-S] cluster scaffold protein carrying a second [4Fe-4S](2+) cluster] + N(6)-octanoyl-L-lysyl-[protein] + 2 oxidized [2Fe-2S]-[ferredoxin] + 2 S-adenosyl-L-methionine + 4 H(+) = [[Fe-S] cluster scaffold protein] + N(6)-[(R)-dihydrolipoyl]-L-lysyl-[protein] + 4 Fe(3+) + 2 hydrogen sulfide + 2 5'-deoxyadenosine + 2 L-methionine + 2 reduced [2Fe-2S]-[ferredoxin]. Its pathway is protein modification; protein lipoylation via endogenous pathway; protein N(6)-(lipoyl)lysine from octanoyl-[acyl-carrier-protein]: step 2/2. Functionally, catalyzes the radical-mediated insertion of two sulfur atoms into the C-6 and C-8 positions of the octanoyl moiety bound to the lipoyl domains of lipoate-dependent enzymes, thereby converting the octanoylated domains into lipoylated derivatives. The sequence is that of Lipoyl synthase from Verminephrobacter eiseniae (strain EF01-2).